Consider the following 548-residue polypeptide: Natural resistance-associated macrophage protein 1 (548 aa).

A disordered region spans residues 1–38 (MSGDTGPPKQGGTRYGSISSPPSPEPQQAPPGGTYLSE). Residues 1–55 (MSGDTGPPKQGGTRYGSISSPPSPEPQQAPPGGTYLSEKIPIPDTESGTFSLRKL) are Cytoplasmic-facing. The helical transmembrane segment at 56 to 73 (WAFTGPGFLMSIAFLDPG) threads the bilayer. Topologically, residues 74–82 (NIESDLQAG) are extracellular. The chain crosses the membrane as a helical span at residues 83 to 102 (AVAGFKLLWVLLWATVLGLL). The Cytoplasmic portion of the chain corresponds to 103–139 (CQRLAARLGVVTGKDLGEVCHLYYPKVPRILLWLTIE). The chain crosses the membrane as a helical span at residues 140–160 (LAIVGSDMQEVIGTAIAFSLL). Residues 161–164 (SAGR) are Extracellular-facing. A helical membrane pass occupies residues 165-184 (IPLWGGVLITVVDTFFFLFL). The Cytoplasmic segment spans residues 185–193 (DNYGLRKLE). A helical membrane pass occupies residues 194–214 (AFFGFLITIMALTFGYEYVVA). Over 215–237 (QPAQGALLQGLFLPSCPGCGQPE) the chain is Extracellular. The chain crosses the membrane as a helical span at residues 238–256 (LLQAVGIIGAIIMPHNIYL). Residues 257-284 (HSSLVKSREVDRSRRADIREANMYFLIE) lie on the Cytoplasmic side of the membrane. Residues 285 to 304 (ATIALSVSFLINLFVMAVFG) traverse the membrane as a helical segment. Topologically, residues 305–346 (QAFYKQTNQAAFNICADSSLHDYAPIFPRNNLTVAVDIYQGG) are extracellular. Residue N335 is glycosylated (N-linked (GlcNAc...) asparagine). A helical transmembrane segment spans residues 347-366 (VILGCLFGPPALYIWAVGLL). Residues 367 to 397 (AAGQSSTMTGTYAGQFVMEGFLKLRWSRFAR) lie on the Cytoplasmic side of the membrane. A helical membrane pass occupies residues 398 to 415 (VLLTRSCAILPTVLLAVF). Residues 416–426 (RDLRDLSGLND) are Extracellular-facing. The helical transmembrane segment at 427–447 (LLNVLQSLLLPFAVLPILTFT) threads the bilayer. The Cytoplasmic portion of the chain corresponds to 448-463 (SMPALMQEFANGLVSK). A helical membrane pass occupies residues 464 to 485 (VITSSIMVLVCAVNLYFVISYL). At 486–493 (PSLPHPAY) the chain is on the extracellular side. A helical membrane pass occupies residues 494–513 (FSLVALLAAAYLGLTTYLVW). Residues 514-548 (TCLITQGATLLAHSSHQRFLYGLPEEDQEKGRTSG) lie on the Cytoplasmic side of the membrane.

Belongs to the NRAMP family.

The protein localises to the late endosome membrane. Its subcellular location is the lysosome membrane. The catalysed reaction is Zn(2+)(in) + H(+)(out) = Zn(2+)(out) + H(+)(in). It catalyses the reaction Fe(2+)(in) + H(+)(out) = Fe(2+)(out) + H(+)(in). It carries out the reaction Mn(2+)(in) + H(+)(out) = Mn(2+)(out) + H(+)(in). Its function is as follows. Macrophage-specific antiporter that fluxes metal ions in either direction against a proton gradient. Localized to late endosomal lysosomal membranes, delivers bivalent cations from the cytosol into these acidic compartments where they may directly affect antimicrobial activity. Involved in iron metabolism and host natural resistance to infection with intracellular parasites. Pathogen resistance involves sequestration of Fe(2+) and Mn(2+), cofactors of both prokaryotic and eukaryotic catalases and superoxide dismutases, not only to protect the macrophage against its own generation of reactive oxygen species, but to deny the cations to the pathogen for synthesis of its protective enzymes. This chain is Natural resistance-associated macrophage protein 1 (SLC11A1), found in Bos taurus (Bovine).